A 65-amino-acid polypeptide reads, in one-letter code: MPKMKTKKSVAKRFKLTGTGKLKRAQAFKSHILTKKSRKTKRNLRKTAYVSETQEKVMKKLLPYV.

Belongs to the bacterial ribosomal protein bL35 family.

In Clostridium kluyveri (strain NBRC 12016), this protein is Large ribosomal subunit protein bL35.